We begin with the raw amino-acid sequence, 163 residues long: uncharacterized protein (163 aa).

This is an uncharacterized protein from Orgyia pseudotsugata (Douglas-fir tussock moth).